Here is a 298-residue protein sequence, read N- to C-terminus: Inosose dehydratase (298 aa).

The protein belongs to the IolE/MocC family. The cofactor is glutathione. Requires Co(2+) as cofactor. It depends on Mn(2+) as a cofactor.

It carries out the reaction scyllo-inosose = 3D-3,5/4-trihydroxycyclohexane-1,2-dione + H2O. It participates in polyol metabolism; myo-inositol degradation into acetyl-CoA; acetyl-CoA from myo-inositol: step 2/7. Its function is as follows. Catalyzes the dehydration of inosose (2-keto-myo-inositol, 2KMI or 2,4,6/3,5-pentahydroxycyclohexanone) to 3D-(3,5/4)-trihydroxycyclohexane-1,2-dione (D-2,3-diketo-4-deoxy-epi-inositol). The polypeptide is Inosose dehydratase (Clostridium tetani (strain Massachusetts / E88)).